The chain runs to 119 residues: Large ribosomal subunit protein bL20 (119 aa).

This sequence belongs to the bacterial ribosomal protein bL20 family.

In terms of biological role, binds directly to 23S ribosomal RNA and is necessary for the in vitro assembly process of the 50S ribosomal subunit. It is not involved in the protein synthesizing functions of that subunit. The sequence is that of Large ribosomal subunit protein bL20 from Thermoanaerobacter pseudethanolicus (strain ATCC 33223 / 39E) (Clostridium thermohydrosulfuricum).